A 111-amino-acid polypeptide reads, in one-letter code: Prothymosin alpha-A (111 aa).

The interval 1–111 (MSDTAVDASV…IKKQKTDEDD (111 aa)) is disordered. A compositionally biased stretch (basic and acidic residues) spans 9–42 (SVEKTTKDLKAKEKEVVEEAENGKDKPTNGKAEN). Acidic residues-rich tracts occupy residues 43-81 (EENGEPEVDNEGDEEDEVDEEDEEDEVEGEDDDDDDEVE) and 90-100 (EDDEDDDDDDV). Basic and acidic residues predominate over residues 101-111 (EIKKQKTDEDD).

The protein belongs to the pro/parathymosin family.

It is found in the nucleus. The chain is Prothymosin alpha-A (ptma-a) from Xenopus laevis (African clawed frog).